The sequence spans 899 residues: Protein translocase subunit SecA (899 aa).

ATP-binding positions include Q87, 105–109 (GEGKT), and D512. The segment at 846 to 899 (MEEEQQQQAQKKIVFNLGEEPATAPQPARSKKSASRNDPCPCGSGKKYKKCCGK) is disordered. C885, C887, C896, and C897 together coordinate Zn(2+).

This sequence belongs to the SecA family. In terms of assembly, monomer and homodimer. Part of the essential Sec protein translocation apparatus which comprises SecA, SecYEG and auxiliary proteins SecDF-YajC and YidC. The cofactor is Zn(2+).

The protein resides in the cell inner membrane. The protein localises to the cytoplasm. The enzyme catalyses ATP + H2O + cellular proteinSide 1 = ADP + phosphate + cellular proteinSide 2.. Its function is as follows. Part of the Sec protein translocase complex. Interacts with the SecYEG preprotein conducting channel. Has a central role in coupling the hydrolysis of ATP to the transfer of proteins into and across the cell membrane, serving as an ATP-driven molecular motor driving the stepwise translocation of polypeptide chains across the membrane. In Geobacter metallireducens (strain ATCC 53774 / DSM 7210 / GS-15), this protein is Protein translocase subunit SecA.